Consider the following 1710-residue polypeptide: Ankyrin repeat domain-containing protein 26 (1710 aa).

The tract at residues Met-1 to His-41 is disordered. Phosphoserine is present on residues Ser-11 and Ser-15. ANK repeat units lie at residues Arg-45–Asp-75, Met-79–Val-108, Glu-112–Leu-141, His-145–Ala-174, and Asp-178–Ala-207. The interval Lys-222–Pro-274 is disordered. A phosphoserine mark is found at Ser-241, Ser-261, Ser-489, and Ser-530. The tract at residues Asp-504 to Asn-630 is disordered. Residues Ala-529–Asp-566 adopt a coiled-coil conformation. Residues Thr-569–Gly-580 are compositionally biased toward acidic residues. Basic and acidic residues-rich tracts occupy residues Lys-586–Glu-602 and Lys-613–Lys-626. Ser-631 carries the phosphoserine modification. A compositionally biased stretch (acidic residues) spans Asp-650–Glu-660. Residues Asp-650–Cys-698 form a disordered region. A compositionally biased stretch (basic and acidic residues) spans Gly-661–Lys-673. Coiled coils occupy residues Lys-743–Met-873, Glu-905–Leu-1472, Asn-1517–Leu-1587, and Leu-1649–Gly-1674. Residues Ala-892 to His-912 form a disordered region.

As to quaternary structure, interacts with TRIO. Interacts with GPS2. Interacts with CCDC85B. Interacts with HMMR.

In terms of biological role, acts as a regulator of adipogenesis. Involved in the regulation of the feeding behavior. This is Ankyrin repeat domain-containing protein 26 from Homo sapiens (Human).